A 33-amino-acid polypeptide reads, in one-letter code: Thrombin-like enzyme RP34 (33 aa).

Positions 1–33 constitute a Peptidase S1 domain; it reads VIGGDEXDINEHRSLALMYXSWSHRFIXXGXLI.

This sequence belongs to the peptidase S1 family. Snake venom subfamily. As to quaternary structure, homodimer. Expressed by the venom gland.

It is found in the secreted. The catalysed reaction is Selective cleavage of Arg-|-Xaa bond in fibrinogen, to form fibrin, and release fibrinopeptide A. The specificity of further degradation of fibrinogen varies with species origin of the enzyme.. Thrombin-like snake venom serine protease that displays clotting activity on fibrinogen. Shows both arginine-ester hydrolase and amidase activities on synthetic substrates. Also shows proteolytic activity toward casein. The chain is Thrombin-like enzyme RP34 from Cerastes cerastes (Horned desert viper).